A 165-amino-acid polypeptide reads, in one-letter code: MAAESSFDIVSKIDRQEVDNAVNQASRELSQRFDFKGTGSTISWAGEHAVEIKSNSEERAKAALDVFKSKLVKRGVSLKILDVPETPKVSGKEYRLPITLKEGISPENAKKIAKMIREEFPKGVKAQIQGDELRVSSKKKDDLQAVIAMLKNSDLDVALQFVNFR.

This sequence belongs to the YajQ family.

In terms of biological role, nucleotide-binding protein. This chain is Nucleotide-binding protein Tfu_2672, found in Thermobifida fusca (strain YX).